The primary structure comprises 213 residues: Tellurium resistance protein TerX (213 aa).

The protein belongs to the CAPAB/TerDEXZ family.

Functionally, not known; seems to contribute to the tellurium resistance (Ter) mechanism. Also involved in phage inhibition (Phi) and colicin resistance (PacB). In Serratia marcescens, this protein is Tellurium resistance protein TerX (terX).